Reading from the N-terminus, the 434-residue chain is MSFNTIIDWNSCTAEQQRQLLMRPAISASESITRTVNDILDNVKARGDEALREYSAKFDKTTVTALKVSAEEIAAASERLSDELKQAMAVAVKNIETFHTAQKLPPVDVETQPGVRCQQVTRPVASVGLYIPGGSAPLFSTVLMLATPARIAGCKKVVLCSPPPIADEILYAAQLCGVQDVFNVGGAQAIAALAFGTESVPKVDKIFGPGNAFVTEAKRQVSQRLDGAAIDMPAGPSEVLVIADSGATPDFVASDLLSQAEHGPDSQVILLTPAADMARRVAEAVERQLAELPRAETARQALNASRLIVTKDLAQCVEISNQYGPEHLIIQTRNARDLVDGITSAGSVFLGDWSLESAGDYASGTNHVLPTYGYTATCSSLGLADFQKRMTVQELSKEGFSALASTIETLAAAERLTAHKNAVTLRVNALKEQA.

Residues Tyr130, Gln188, and Asn211 each coordinate NAD(+). The substrate site is built by Ser237, Gln259, and His262. Zn(2+) contacts are provided by Gln259 and His262. Residues Glu326 and His327 each act as proton acceptor in the active site. Residues His327, Asp360, Glu414, and His419 each coordinate substrate. Residue Asp360 coordinates Zn(2+). His419 contacts Zn(2+).

This sequence belongs to the histidinol dehydrogenase family. Homodimer. Zn(2+) serves as cofactor.

It carries out the reaction L-histidinol + 2 NAD(+) + H2O = L-histidine + 2 NADH + 3 H(+). It functions in the pathway amino-acid biosynthesis; L-histidine biosynthesis; L-histidine from 5-phospho-alpha-D-ribose 1-diphosphate: step 9/9. Catalyzes the sequential NAD-dependent oxidations of L-histidinol to L-histidinaldehyde and then to L-histidine. This is Histidinol dehydrogenase from Shigella boydii serotype 4 (strain Sb227).